A 246-amino-acid polypeptide reads, in one-letter code: Major prion protein (246 aa).

An N-terminal signal peptide occupies residues 1-15 (MLVLFVATWSDLGLC). The tract at residues 16–223 (KKRPKPGGWN…ESQAYYQRGS (208 aa)) is interaction with GRB2, ERI3 and SYN1. Residues 18–102 (RPKPGGWNTG…HKPSKPKTSM (85 aa)) form a disordered region. 5 repeat units span residues 44 to 52 (PQGGGGWGQ), 53 to 60 (PHGGGWGQ), 61 to 68 (PHGGGWGQ), 69 to 76 (PHGGGWGQ), and 77 to 84 (PHGGGWGQ). Residues 44–84 (PQGGGGWGQPHGGGWGQPHGGGWGQPHGGGWGQPHGGGWGQ) are 5 X 8 AA tandem repeats of P-H-G-G-G-W-G-Q. A compositionally biased stretch (gly residues) spans 45–88 (QGGGGWGQPHGGGWGQPHGGGWGQPHGGGWGQPHGGGWGQGGGT). Cu(2+) contacts are provided by His-54, Gly-55, Gly-56, His-62, Gly-63, Gly-64, His-70, Gly-71, Gly-72, His-78, Gly-79, and Gly-80. Basic residues predominate over residues 91–102 (QWHKPSKPKTSM). A disulfide bridge links Cys-172 with Cys-207. Residues Asn-174 and Asn-190 are each glycosylated (N-linked (GlcNAc...) asparagine). The GPI-anchor amidated serine moiety is linked to residue Ser-223. The propeptide at 224 to 246 (SMVLFSSPPVILLISFLIFLIVG) is removed in mature form.

The protein belongs to the prion family. In terms of assembly, monomer and homodimer. Has a tendency to aggregate into amyloid fibrils containing a cross-beta spine, formed by a steric zipper of superposed beta-strands. Soluble oligomers may represent an intermediate stage on the path to fibril formation. Copper binding may promote oligomerization. Interacts with GRB2, APP, ERI3/PRNPIP and SYN1. Mislocalized cytosolically exposed PrP interacts with MGRN1; this interaction alters MGRN1 subcellular location and causes lysosomal enlargement. Interacts with KIAA1191.

It localises to the cell membrane. The protein localises to the golgi apparatus. In terms of biological role, its primary physiological function is unclear. Has cytoprotective activity against internal or environmental stresses. May play a role in neuronal development and synaptic plasticity. May be required for neuronal myelin sheath maintenance. May play a role in iron uptake and iron homeostasis. Soluble oligomers are toxic to cultured neuroblastoma cells and induce apoptosis (in vitro). Association with GPC1 (via its heparan sulfate chains) targets PRNP to lipid rafts. Also provides Cu(2+) or Zn(2+) for the ascorbate-mediated GPC1 deaminase degradation of its heparan sulfate side chains. In Cercopithecus mona (Mona monkey), this protein is Major prion protein (PRNP).